Consider the following 197-residue polypeptide: Nucleoid occlusion factor SlmA (197 aa).

The HTH tetR-type domain maps to 7-67 (INRREHILQC…GLIDFIEESL (61 aa)). Positions 30–49 (TTAKLAAEVGVSEAALYRHF) form a DNA-binding region, H-T-H motif.

This sequence belongs to the nucleoid occlusion factor SlmA family. As to quaternary structure, homodimer. Interacts with FtsZ.

It localises to the cytoplasm. It is found in the nucleoid. In terms of biological role, required for nucleoid occlusion (NO) phenomenon, which prevents Z-ring formation and cell division over the nucleoid. Acts as a DNA-associated cell division inhibitor that binds simultaneously chromosomal DNA and FtsZ, and disrupts the assembly of FtsZ polymers. SlmA-DNA-binding sequences (SBS) are dispersed on non-Ter regions of the chromosome, preventing FtsZ polymerization at these regions. The sequence is that of Nucleoid occlusion factor SlmA from Shewanella sediminis (strain HAW-EB3).